Here is a 91-residue protein sequence, read N- to C-terminus: Gem-associated protein 7 homolog (91 aa).

In terms of domain architecture, Sm spans 18–86; the sequence is LKFYQKMASA…VVGIEYNLVQ (69 aa).

Belongs to the gemin-7 family. Part of the core SMN complex at least composed of smn1, yip11/gem2, gem6, gem7 and gem8. Interacts with gem6; the interaction is direct. Interacts with gem8; the interaction is direct.

The sequence is that of Gem-associated protein 7 homolog from Schizosaccharomyces pombe (strain 972 / ATCC 24843) (Fission yeast).